We begin with the raw amino-acid sequence, 792 residues long: Cadherin-11 (792 aa).

An N-terminal signal peptide occupies residues Met-1 to Ala-22. Residues Ile-23–Arg-53 constitute a propeptide that is removed on maturation. Cadherin domains lie at Gly-54 to Phe-159, Leu-160 to Phe-268, Pro-269 to Phe-383, Leu-384 to Pro-486, and Lys-487 to Asn-608. Topologically, residues Gly-54–Thr-613 are extracellular. N-linked (GlcNAc...) asparagine glycans are attached at residues Asn-455, Asn-536, and Asn-594. The helical transmembrane segment at Gly-614–Val-634 threads the bilayer. Over Thr-635 to Ser-792 the chain is Cytoplasmic.

The protein resides in the cell membrane. In terms of biological role, cadherins are calcium-dependent cell adhesion proteins. They preferentially interact with themselves in a homophilic manner in connecting cells; cadherins may thus contribute to the sorting of heterogeneous cell types. Required for proper focal adhesion assembly. Involved in the regulation of cell migration. This chain is Cadherin-11 (CDH11), found in Gallus gallus (Chicken).